Reading from the N-terminus, the 302-residue chain is NAD kinase 2 (302 aa).

Asp-78 functions as the Proton acceptor in the catalytic mechanism. NAD(+)-binding positions include 78–79, 152–153, Asp-182, and 193–198; these read DG, NE, and TAYSLS.

The protein belongs to the NAD kinase family. The cofactor is a divalent metal cation.

The protein localises to the cytoplasm. It catalyses the reaction NAD(+) + ATP = ADP + NADP(+) + H(+). Its function is as follows. Involved in the regulation of the intracellular balance of NAD and NADP, and is a key enzyme in the biosynthesis of NADP. Catalyzes specifically the phosphorylation on 2'-hydroxyl of the adenosine moiety of NAD to yield NADP. The protein is NAD kinase 2 of Prochlorococcus marinus (strain NATL2A).